A 279-amino-acid polypeptide reads, in one-letter code: Shikimate dehydrogenase (NADP(+)) (279 aa).

Residues 19–21 and threonine 66 contribute to the shikimate site; that span reads SFS. Lysine 70 acts as the Proton acceptor in catalysis. Glutamate 82 is a binding site for NADP(+). Positions 91 and 106 each coordinate shikimate. Residues 130-134 and leucine 222 each bind NADP(+); that span reads GSGGA. Tyrosine 224 contributes to the shikimate binding site. Glycine 245 lines the NADP(+) pocket.

The protein belongs to the shikimate dehydrogenase family. Homodimer.

The catalysed reaction is shikimate + NADP(+) = 3-dehydroshikimate + NADPH + H(+). It functions in the pathway metabolic intermediate biosynthesis; chorismate biosynthesis; chorismate from D-erythrose 4-phosphate and phosphoenolpyruvate: step 4/7. Involved in the biosynthesis of the chorismate, which leads to the biosynthesis of aromatic amino acids. Catalyzes the reversible NADPH linked reduction of 3-dehydroshikimate (DHSA) to yield shikimate (SA). In Methanococcus maripaludis (strain C6 / ATCC BAA-1332), this protein is Shikimate dehydrogenase (NADP(+)).